The chain runs to 111 residues: Small ribosomal subunit protein uS15c (111 aa).

The protein belongs to the universal ribosomal protein uS15 family. As to quaternary structure, part of the 30S ribosomal subunit.

The protein localises to the plastid. It is found in the chloroplast. The sequence is that of Small ribosomal subunit protein uS15c (rps15) from Staurastrum punctulatum (Green alga).